The sequence spans 441 residues: Trigger factor (441 aa).

One can recognise a PPIase FKBP-type domain in the interval 161 to 246; that stretch reads GDKVTIDFLG…VHEVLGEKLP (86 aa).

It belongs to the FKBP-type PPIase family. Tig subfamily.

The protein resides in the cytoplasm. It carries out the reaction [protein]-peptidylproline (omega=180) = [protein]-peptidylproline (omega=0). Its function is as follows. Involved in protein export. Acts as a chaperone by maintaining the newly synthesized protein in an open conformation. Functions as a peptidyl-prolyl cis-trans isomerase. The sequence is that of Trigger factor from Teredinibacter turnerae (strain ATCC 39867 / T7901).